Consider the following 55-residue polypeptide: MAKGGREKIKLESTAGTGHFYTTTKNKKTMPEKMEISKFDPKARKHVMYKETKLK.

Positions M1 to L11 are enriched in basic and acidic residues. Residues M1 to T29 form a disordered region. Residues T14–T24 show a composition bias toward polar residues.

Belongs to the bacterial ribosomal protein bL33 family.

The polypeptide is Large ribosomal subunit protein bL33 (Thiobacillus denitrificans (strain ATCC 25259 / T1)).